The sequence spans 227 residues: ATP-dependent dethiobiotin synthetase BioD (227 aa).

12–17 is an ATP binding site; it reads DVGKTV. A Mg(2+)-binding site is contributed by T16. K37 is a catalytic residue. T41 provides a ligand contact to substrate. ATP is bound by residues D50, 110 to 113, 171 to 172, and 201 to 203; these read EGAG, GS, and PAG. The Mg(2+) site is built by D50 and E110.

The protein belongs to the dethiobiotin synthetase family. In terms of assembly, homodimer. Requires Mg(2+) as cofactor.

The protein localises to the cytoplasm. It catalyses the reaction (7R,8S)-7,8-diammoniononanoate + CO2 + ATP = (4R,5S)-dethiobiotin + ADP + phosphate + 3 H(+). Its pathway is cofactor biosynthesis; biotin biosynthesis; biotin from 7,8-diaminononanoate: step 1/2. Catalyzes a mechanistically unusual reaction, the ATP-dependent insertion of CO2 between the N7 and N8 nitrogen atoms of 7,8-diaminopelargonic acid (DAPA, also called 7,8-diammoniononanoate) to form a ureido ring. The chain is ATP-dependent dethiobiotin synthetase BioD from Rhodococcus erythropolis (strain PR4 / NBRC 100887).